The primary structure comprises 1000 residues: SEC23-interacting protein (1000 aa).

The interval 1 to 367 is interaction with SEC23A; the sequence is MAERKPNGGS…YTEEFSEKLE (367 aa). Residues 133-252 form a disordered region; the sequence is FSPSISKAQP…QQVPARPGAP (120 aa). The segment covering 154 to 167 has biased composition (low complexity); it reads SYLPSQPSSLPPSY. Residues 207–218 are compositionally biased toward pro residues; that stretch reads PGPPAHPPPSGP. Over residues 235-246 the composition is skewed to low complexity; the sequence is SSVQSPAQQQVP. Positions 644–707 constitute an SAM domain; the sequence is KEVLTLQETL…NFVEHKAAKL (64 aa). A disordered region spans residues 716–748; it reads AVAATSTKGQEQSAQKTKDMASLPSESNEPKRK. A phosphoserine mark is found at S737 and S926. In terms of domain architecture, DDHD spans 779-989; sequence LDFEPEIFFA…ALLLLKEIYR (211 aa).

It belongs to the PA-PLA1 family. In terms of assembly, interacts with SEC23A. Ubiquitously expressed with stronger levels detected in heart, liver and skeletal muscle.

The protein resides in the cytoplasmic vesicle. Its subcellular location is the COPII-coated vesicle membrane. It is found in the endoplasmic reticulum. Its function is as follows. Plays a role in the organization of endoplasmic reticulum exit sites. Specifically binds to phosphatidylinositol 3-phosphate (PI(3)P), phosphatidylinositol 4-phosphate (PI(4)P) and phosphatidylinositol 5-phosphate (PI(5)P). The protein is SEC23-interacting protein (SEC23IP) of Homo sapiens (Human).